We begin with the raw amino-acid sequence, 135 residues long: Large ribosomal subunit protein bL21 (135 aa).

The disordered stretch occupies residues Tyr85 to Ala135. Residues Gln93–Gly107 are compositionally biased toward polar residues. Residues Ser111 to Ala135 show a composition bias toward acidic residues.

The protein belongs to the bacterial ribosomal protein bL21 family. Part of the 50S ribosomal subunit. Contacts protein L20.

In terms of biological role, this protein binds to 23S rRNA in the presence of protein L20. The chain is Large ribosomal subunit protein bL21 from Salinibacter ruber (strain DSM 13855 / M31).